Consider the following 212-residue polypeptide: Large ribosomal subunit protein uL3 (212 aa).

At Gln153 the chain carries N5-methylglutamine.

Belongs to the universal ribosomal protein uL3 family. As to quaternary structure, part of the 50S ribosomal subunit. Forms a cluster with proteins L14 and L19. Methylated by PrmB.

Its function is as follows. One of the primary rRNA binding proteins, it binds directly near the 3'-end of the 23S rRNA, where it nucleates assembly of the 50S subunit. The protein is Large ribosomal subunit protein uL3 of Shewanella woodyi (strain ATCC 51908 / MS32).